A 436-amino-acid chain; its full sequence is UPF0229 protein mll9637 (436 aa).

A disordered region spans residues 54–103; it reads IPRKGTGEPTFGDDKESGRRQHILPGNRTFSSGDLIPKPGGGGGYGSAAG.

The protein belongs to the UPF0229 family.

The sequence is that of UPF0229 protein mll9637 from Mesorhizobium japonicum (strain LMG 29417 / CECT 9101 / MAFF 303099) (Mesorhizobium loti (strain MAFF 303099)).